Consider the following 436-residue polypeptide: 23S rRNA (uracil(1939)-C(5))-methyltransferase RlmD (436 aa).

The region spanning 10–68 (KQKTTQKIVAEIQDLDYQGLGVAKIQGKTWFIENALPTEKVEAVVTDEKRQYGLATAQK) is the TRAM domain. [4Fe-4S] cluster-binding residues include Cys81, Cys87, Cys90, and Cys168. S-adenosyl-L-methionine-binding residues include Gln270, Phe299, Asn304, Glu320, Asp347, and Asp368. Residue Cys394 is the Nucleophile of the active site.

The protein belongs to the class I-like SAM-binding methyltransferase superfamily. RNA M5U methyltransferase family. RlmD subfamily.

It carries out the reaction uridine(1939) in 23S rRNA + S-adenosyl-L-methionine = 5-methyluridine(1939) in 23S rRNA + S-adenosyl-L-homocysteine + H(+). Functionally, catalyzes the formation of 5-methyl-uridine at position 1939 (m5U1939) in 23S rRNA. The chain is 23S rRNA (uracil(1939)-C(5))-methyltransferase RlmD from Haemophilus parainfluenzae (strain T3T1).